We begin with the raw amino-acid sequence, 176 residues long: 2-C-methyl-D-erythritol 2,4-cyclodiphosphate synthase (176 aa).

Positions 23, 25, and 60 each coordinate a divalent metal cation. Position 23–25 (23–25 (DSH)) interacts with 4-CDP-2-C-methyl-D-erythritol 2-phosphate. Residue 149-152 (TSGE) coordinates 4-CDP-2-C-methyl-D-erythritol 2-phosphate.

Belongs to the IspF family. As to quaternary structure, homotrimer. Requires a divalent metal cation as cofactor.

It carries out the reaction 4-CDP-2-C-methyl-D-erythritol 2-phosphate = 2-C-methyl-D-erythritol 2,4-cyclic diphosphate + CMP. It functions in the pathway isoprenoid biosynthesis; isopentenyl diphosphate biosynthesis via DXP pathway; isopentenyl diphosphate from 1-deoxy-D-xylulose 5-phosphate: step 4/6. Its function is as follows. Involved in the biosynthesis of isopentenyl diphosphate (IPP) and dimethylallyl diphosphate (DMAPP), two major building blocks of isoprenoid compounds. Catalyzes the conversion of 4-diphosphocytidyl-2-C-methyl-D-erythritol 2-phosphate (CDP-ME2P) to 2-C-methyl-D-erythritol 2,4-cyclodiphosphate (ME-CPP) with a corresponding release of cytidine 5-monophosphate (CMP). This chain is 2-C-methyl-D-erythritol 2,4-cyclodiphosphate synthase, found in Chlamydia felis (strain Fe/C-56) (Chlamydophila felis).